Reading from the N-terminus, the 235-residue chain is Elongation factor Tu (235 aa).

One can recognise a tr-type G domain in the interval 1 to 125 (KNMITGAAQM…QVDEYIPAPE (125 aa)). 47–50 (NKQD) lines the GTP pocket.

The protein belongs to the TRAFAC class translation factor GTPase superfamily. Classic translation factor GTPase family. EF-Tu/EF-1A subfamily. Monomer.

It is found in the cytoplasm. It carries out the reaction GTP + H2O = GDP + phosphate + H(+). In terms of biological role, GTP hydrolase that promotes the GTP-dependent binding of aminoacyl-tRNA to the A-site of ribosomes during protein biosynthesis. The chain is Elongation factor Tu (tufA) from Leptolyngbya ectocarpi (Phormidium ectocarpi).